A 469-amino-acid chain; its full sequence is Cysteine protease ATG4D (469 aa).

A compositionally biased stretch (polar residues) spans 1 to 29 (MNSVSPLATQYGSPKGSQQMENRSTQSGG). Positions 1–41 (MNSVSPLATQYGSPKGSQQMENRSTQSGGHEQRKMGHQDAT) are disordered. Residue Cys-131 is the Nucleophile of the active site. Residues 169-191 (IRSSSPPSMPLSSLATGHSAGDY) form a disordered region. Residues 171-182 (SSSPPSMPLSSL) are compositionally biased toward low complexity. Catalysis depends on residues Asp-356 and His-358. The disordered stretch occupies residues 436-469 (QEYAEGPQSSSHPPVCRKKGPLVKRPSSDEFEFL).

It belongs to the peptidase C54 family.

The protein resides in the cytoplasm. The enzyme catalyses [protein]-C-terminal L-amino acid-glycyl-phosphatidylethanolamide + H2O = [protein]-C-terminal L-amino acid-glycine + a 1,2-diacyl-sn-glycero-3-phosphoethanolamine. It carries out the reaction [protein]-C-terminal L-amino acid-glycyl-phosphatidylserine + H2O = [protein]-C-terminal L-amino acid-glycine + a 1,2-diacyl-sn-glycero-3-phospho-L-serine. In terms of biological role, cysteine protease that plays a key role in autophagy by mediating both proteolytic activation and delipidation of ATG8 family proteins. The protease activity is required for proteolytic activation of ATG8 family proteins to reveal a C-terminal glycine. Exposure of the glycine at the C-terminus is essential for ATG8 proteins conjugation to phosphatidylethanolamine (PE) and insertion to membranes, which is necessary for autophagy. In addition to the protease activity, also mediates delipidation of ATG8 family proteins. Catalyzes delipidation of PE-conjugated forms of ATG8 proteins during macroautophagy. Also involved in non-canonical autophagy, a parallel pathway involving conjugation of ATG8 proteins to single membranes at endolysosomal compartments, by catalyzing delipidation of ATG8 proteins conjugated to phosphatidylserine (PS). The sequence is that of Cysteine protease ATG4D from Xenopus laevis (African clawed frog).